The following is a 376-amino-acid chain: Mitogen-activated protein kinase 4 (376 aa).

The region spanning 43–329 (VPPLRPIGRG…VDEALCHPYL (287 aa)) is the Protein kinase domain. Residues 49 to 57 (IGRGAYGIV) and Lys-72 contribute to the ATP site. Catalysis depends on Asp-169, which acts as the Proton acceptor. A Phosphothreonine modification is found at Thr-201. The short motif at 201–203 (TEY) is the TXY element. At Tyr-203 the chain carries Phosphotyrosine.

Belongs to the protein kinase superfamily. CMGC Ser/Thr protein kinase family. MAP kinase subfamily. Interacts with MEKK1, MKK1, MKK2 and MKK6. May form a ternary complex composed of MEKK1 and MKK1/MKK2 and MPK4. Interacts with MKS1 and AP2C1. May form a ternary or larger complex with MKS1 and WRKY25 and/or WRKY33. Interacts with MAP65-1. No interactions with RACK1A, RACK1B or RACK1C. Interacts directly with ASR3 and mediates its phosphorylation. Binds to MEKK2. Interacts with PAT1. Binds to HT1. Dually phosphorylated on Thr-201 and Tyr-203, which activates the enzyme. Autophosphorylated on serine and tyrosine residues. Dephosphorylated by DSPTP1. Phosphorylated by MKK6 in vitro. As to expression, ubiquitous. Expressed in the veins and stomatal guard cells of leaf plates, petioles, stem, roots and flowers.

Its subcellular location is the cytoplasm. The protein resides in the nucleus. The protein localises to the cytoskeleton. It catalyses the reaction L-seryl-[protein] + ATP = O-phospho-L-seryl-[protein] + ADP + H(+). The catalysed reaction is L-threonyl-[protein] + ATP = O-phospho-L-threonyl-[protein] + ADP + H(+). With respect to regulation, activated by threonine and tyrosine phosphorylation. Activated by the MAP kinase kinases MKK1 and MKK2. Activated in response to touch, wounding, low temperature, low humidity, salt stress and the bacterial elicitors flagellin and harpin. Activated upon Pseudomonas syringae pv. tomato DC3000 infection. Repressed by the protein phosphatase 2C AP2C1. Repressed by DSPTP1-mediated dephosphorylation. Activated by the MAP kinase kinase MKK6 in vitro. Its function is as follows. The ANPs-MKK6-MPK4 module is involved in the regulation of plant cytokinesis during meiosis and mitosis. Essential to promote the progression of cytokinesis and for cellularization (formation of the cell plate) during male-specific meiosis. Involved in cortical microtubules organization and stabilization by regulating the phosphorylation state of microtubule-associated proteins such as MAP65-1. Involved in root hair development process. Negative regulator of systemic acquired resistance (SAR) and salicylic acid- (SA) mediated defense response. Required for jasmonic acid- (JA) mediated defense gene expression. May regulate activity of transcription factor controlling pathogenesis-related (PR) gene expression. Seems to act independently of the SAR regulatory protein NPR1 (Nonexpresser of PR1). Phosphorylates MKS1 and transcription factors WRKY25 and WRKY33. The MEKK1, MKK1/MKK2 and MPK4 function in a signaling pathway that modulates the expression of genes responding to biotic and abiotic stresses and also plays an important role in pathogen defense by negatively regulating innate immunity. Phosphorylates MEKK2 upon treatment with flg22. Involved in stomatal movement regulation by repressing HT1 and HT1-mediated GHR1 phosphorylation. The polypeptide is Mitogen-activated protein kinase 4 (Arabidopsis thaliana (Mouse-ear cress)).